The following is a 555-amino-acid chain: Protein PLASTID TRANSCRIPTIONALLY ACTIVE 12, chloroplastic (555 aa).

The transit peptide at 1–58 (MASCYNPWRLFPGMSTAVPAGPVTAPAHSRTCKSSKVFSALPHRRGLLFLGTRRARIK) directs the protein to the chloroplast. Disordered stretches follow at residues 80–100 (YFDSTSGQLEPASGARASIPG), 115–167 (ARAP…EPDV), and 468–541 (SYNE…IDDS). Residues 144–154 (QVTSASGTEGA) are compositionally biased toward polar residues. 2 stretches are compositionally biased toward acidic residues: residues 471–480 (EDSDDEDEDV) and 490–502 (LEDEEDDRDDVAE). Polar residues predominate over residues 508-519 (NQNWSALKSTGQ). Over residues 521 to 538 (EKPKEKSKKDEMTLKEAI) the composition is skewed to basic and acidic residues.

In terms of assembly, component of the plastid-encoded plastid RNA polymerase (PEP) complex.

It is found in the plastid. It localises to the chloroplast stroma. The protein localises to the nucleus. Its function is as follows. Required for the activity of the plastid-encoded RNA polymerase (PEP) and full expression of genes transcribed by PEP. Required for the proper build-up and formation of the PEP-complex. Binds single-stranded (ss) DNA and RNA, but not double-stranded (ds) DNA. This Zea mays (Maize) protein is Protein PLASTID TRANSCRIPTIONALLY ACTIVE 12, chloroplastic.